The chain runs to 1238 residues: ATP-dependent helicase/nuclease subunit A (1238 aa).

The UvrD-like helicase ATP-binding domain occupies 12–490 (VSWTDDQWKA…IDLNANFRSR (479 aa)). Position 33–40 (33–40 (AAAGSGKT)) interacts with ATP. In terms of domain architecture, UvrD-like helicase C-terminal spans 510 to 818 (GEILYDDNAS…RLVTIHSSKG (309 aa)).

This sequence belongs to the helicase family. AddA subfamily. As to quaternary structure, heterodimer of AddA and AddB/RexB. The cofactor is Mg(2+).

The catalysed reaction is Couples ATP hydrolysis with the unwinding of duplex DNA by translocating in the 3'-5' direction.. The enzyme catalyses ATP + H2O = ADP + phosphate + H(+). In terms of biological role, the heterodimer acts as both an ATP-dependent DNA helicase and an ATP-dependent, dual-direction single-stranded exonuclease. Recognizes the chi site generating a DNA molecule suitable for the initiation of homologous recombination. The AddA nuclease domain is required for chi fragment generation; this subunit has the helicase and 3' -&gt; 5' nuclease activities. The sequence is that of ATP-dependent helicase/nuclease subunit A from Lysinibacillus sphaericus (strain C3-41).